The primary structure comprises 399 residues: MTKDLLALLKERGLFVQANFEKELKQLLNQGSFAFYVGFDPTAPSLHIGNYVLLHVAQIFQAMGHIPHVLLGSGTALIGDPTGRMELRQMMSRETIAENTRNIKKQIRRFLGSNVVFCQNETWLKKLNYIEVIRELGPCFSVNKMLATDAFSARWERGLTLMELNYMVLQAYDFYYLNQKYGVQLQIGGSDQWANILAGADLIRRKTQKQVYGMTTNLLVKANGEKMGKSASGALWLDPQKTSPYDFYQYWINLDDASLQKVFLMLTKLDTKAIETLCNLKGAAIKEAKAKLAFELTDAIHGTKAALVAQAKSARIFAFQPDTETKTVRAGTRLVDVIVDLGLVVSRSEARRVIQQGGLTINQEKVTDVEMVLQASSQPLVIGKGKKRFVTVQVIANTK.

Y36 is a binding site for L-tyrosine. A 'HIGH' region motif is present at residues 41–50 (PTAPSLHIGN). Residues Y166 and Q170 each contribute to the L-tyrosine site. The short motif at 226 to 230 (KMGKS) is the 'KMSKS' region element. An ATP-binding site is contributed by K229. An S4 RNA-binding domain is found at 332–395 (TRLVDVIVDL…KKRFVTVQVI (64 aa)).

It belongs to the class-I aminoacyl-tRNA synthetase family. TyrS type 1 subfamily. As to quaternary structure, homodimer.

The protein localises to the cytoplasm. The enzyme catalyses tRNA(Tyr) + L-tyrosine + ATP = L-tyrosyl-tRNA(Tyr) + AMP + diphosphate + H(+). Its function is as follows. Catalyzes the attachment of tyrosine to tRNA(Tyr) in a two-step reaction: tyrosine is first activated by ATP to form Tyr-AMP and then transferred to the acceptor end of tRNA(Tyr). The sequence is that of Tyrosine--tRNA ligase from Mycoplasma pneumoniae (strain ATCC 29342 / M129 / Subtype 1) (Mycoplasmoides pneumoniae).